A 354-amino-acid polypeptide reads, in one-letter code: Probable L-ascorbate-6-phosphate lactonase UlaG (354 aa).

The protein belongs to the UlaG family. The cofactor is a divalent metal cation.

The protein resides in the cytoplasm. The catalysed reaction is L-ascorbate 6-phosphate + H2O = 3-dehydro-L-gulonate 6-phosphate. Its pathway is cofactor degradation; L-ascorbate degradation; D-xylulose 5-phosphate from L-ascorbate: step 1/4. In terms of biological role, probably catalyzes the hydrolysis of L-ascorbate-6-P into 3-keto-L-gulonate-6-P. Is essential for L-ascorbate utilization under anaerobic conditions. The polypeptide is Probable L-ascorbate-6-phosphate lactonase UlaG (Escherichia coli O127:H6 (strain E2348/69 / EPEC)).